Consider the following 1630-residue polypeptide: Separin (1630 aa).

Residues 1016 to 1037 form a disordered region; sequence SKHSTGLKLCDSPRSSSMTPRG. In terms of domain architecture, Peptidase C50 spans 1443–1542; the sequence is EDNISMILNP…SAAMKYYGKL (100 aa). Cysteine 1531 is a catalytic residue.

In terms of assembly, may bind calcium. Interacts with PDS1. Interacts with MCD1.

It is found in the nucleus. It localises to the cytoplasm. The protein localises to the cytoskeleton. Its subcellular location is the microtubule organizing center. The protein resides in the spindle pole body. It carries out the reaction All bonds known to be hydrolyzed by this endopeptidase have arginine in P1 and an acidic residue in P4. P6 is often occupied by an acidic residue or by a hydroxy-amino-acid residue, the phosphorylation of which enhances cleavage.. It is inactivated via its interaction with PDS1, which probably covers its active site. PDS1 degradation at anaphase, liberates it and triggers MCD1 cleavage. Its function is as follows. Caspase-like protease, which plays a central role in the chromosome segregation by cleaving the MCD1/SCC1 subunit of the cohesin complex at the onset of anaphase. During most of the cell cycle, it is inactivated by securin/PDS1 protein. It also promotes anaphase spindle elongation. A component of the FEAR (CDC14 early anaphase release) network which promotes CDC14 release from the nucleolus during early anaphase. Cleaves SLK19. The protein is Separin (ESP1) of Saccharomyces cerevisiae (strain ATCC 204508 / S288c) (Baker's yeast).